The following is a 21-amino-acid chain: Japonicin-2 (21 aa).

Cysteine 14 and cysteine 21 are joined by a disulfide.

In terms of tissue distribution, expressed by the skin glands.

The protein resides in the secreted. Functionally, antibacterial activity against the Gram-negative bacterium E.coli and the Gram-positive bacterium S.aureus. The sequence is that of Japonicin-2 from Rana japonica (Japanese reddish frog).